Consider the following 467-residue polypeptide: Gamma-aminobutyric acid receptor subunit gamma-2 (467 aa).

The N-terminal stretch at 1 to 39 (MSSPNIWSTGSSVYSTPVFSQKMTVWILLLLSLYPGFTS) is a signal peptide. The Extracellular portion of the chain corresponds to 40-275 (QKSDDDYEDY…FDLSRRMGYF (236 aa)). N-linked (GlcNAc...) asparagine glycans are attached at residues Asn52 and Asn129. A disulfide bond links Cys190 and Cys204. N-linked (GlcNAc...) asparagine glycosylation occurs at Asn247. The chain crosses the membrane as a helical span at residues 276–296 (TIQTYIPCTLIVVLSWVSFWI). The Cytoplasmic portion of the chain corresponds to 297-302 (NKDAVP). A helical membrane pass occupies residues 303–322 (ARTSLGITTVLTMTTLSTIA). Topologically, residues 323–334 (RKSLPKVSYVTA) are extracellular. Residues 335–359 (MDLFVSVCFIFVFSALVEYGTLHYF) traverse the membrane as a helical segment. Residues 360-443 (VSNRKPSKDK…IHIRIAKMDS (84 aa)) lie on the Cytoplasmic side of the membrane. An interaction with GABARAP region spans residues 425-442 (RTGAWRHGRIHIRIAKMD). Residues 444–464 (YARIFFPTAFCLFNLVYWVSY) traverse the membrane as a helical segment. Residues 465-467 (LYL) lie on the Extracellular side of the membrane.

The protein belongs to the ligand-gated ion channel (TC 1.A.9) family. Gamma-aminobutyric acid receptor (TC 1.A.9.5) subfamily. GABRG2 sub-subfamily. As to quaternary structure, heteropentamer, formed by a combination of alpha (GABRA1-6), beta (GABRB1-3), gamma (GABRG1-3), delta (GABRD), epsilon (GABRE), rho (GABRR1-3), pi (GABRP) and theta (GABRQ) chains, each subunit exhibiting distinct physiological and pharmacological properties. Interacts with GABARAP. Interacts with KIF21B. Identified in a complex of 720 kDa composed of LHFPL4, NLGN2, GABRA1, GABRB2, GABRG2 and GABRB3. Interacts with LHFPL4. Interacts with SHISA7; interaction leads to the regulation of GABA(A) receptor trafficking, channel deactivation kinetics and pharmacology. Palmitoylated by ZDHHC3/GODZ; required for the accumulation of GABA(A) receptors at the postsynaptic membrane of inhibitory GABAergic synapses. Post-translationally, glycosylated.

The protein resides in the postsynaptic cell membrane. It localises to the cell membrane. The protein localises to the cell projection. It is found in the dendrite. Its subcellular location is the cytoplasmic vesicle membrane. It carries out the reaction chloride(in) = chloride(out). Its activity is regulated as follows. Allosterically activated by benzodiazepines. Activated by pentobarbital. Inhibited by the antagonist bicuculline. Inhibited by zinc ions. Potentiated by histamine. Its function is as follows. Gamma subunit of the heteropentameric ligand-gated chloride channel gated by gamma-aminobutyric acid (GABA), a major inhibitory neurotransmitter in the brain. GABA-gated chloride channels, also named GABA(A) receptors (GABAAR), consist of five subunits arranged around a central pore and contain GABA active binding site(s) located at the alpha and beta subunit interface(s). When activated by GABA, GABAARs selectively allow the flow of chloride anions across the cell membrane down their electrochemical gradient. Gamma-2/GABRG2-containing GABAARs are found at both synaptic and extrasynaptic sites. Chloride influx into the postsynaptic neuron following GABAAR opening decreases the neuron ability to generate a new action potential, thereby reducing nerve transmission. GABAARs containing alpha-1 and beta-2 or -3 subunits exhibit synaptogenic activity; the gamma-2 subunit being necessary but not sufficient to induce rapid synaptic contacts formation. Extrasynaptic gamma-2-containing receptors contribute to the tonic GABAergic inhibition. GABAARs function also as histamine receptor where histamine binds at the interface of two neighboring beta subunits and potentiates GABA response in a gamma-2 subunit-controlled manner. The sequence is that of Gamma-aminobutyric acid receptor subunit gamma-2 (GABRG2) from Pongo abelii (Sumatran orangutan).